Here is a 157-residue protein sequence, read N- to C-terminus: 2-C-methyl-D-erythritol 2,4-cyclodiphosphate synthase (157 aa).

A divalent metal cation-binding residues include Asp-8 and His-10. 4-CDP-2-C-methyl-D-erythritol 2-phosphate contacts are provided by residues 8 to 10 (DVH) and 34 to 35 (HS). A divalent metal cation is bound at residue His-42. 4-CDP-2-C-methyl-D-erythritol 2-phosphate contacts are provided by residues 56 to 58 (DIG), 132 to 135 (TTNE), and Arg-142.

The protein belongs to the IspF family. Homotrimer. A divalent metal cation serves as cofactor.

The enzyme catalyses 4-CDP-2-C-methyl-D-erythritol 2-phosphate = 2-C-methyl-D-erythritol 2,4-cyclic diphosphate + CMP. The protein operates within isoprenoid biosynthesis; isopentenyl diphosphate biosynthesis via DXP pathway; isopentenyl diphosphate from 1-deoxy-D-xylulose 5-phosphate: step 4/6. Its function is as follows. Involved in the biosynthesis of isopentenyl diphosphate (IPP) and dimethylallyl diphosphate (DMAPP), two major building blocks of isoprenoid compounds. Catalyzes the conversion of 4-diphosphocytidyl-2-C-methyl-D-erythritol 2-phosphate (CDP-ME2P) to 2-C-methyl-D-erythritol 2,4-cyclodiphosphate (ME-CPP) with a corresponding release of cytidine 5-monophosphate (CMP). The polypeptide is 2-C-methyl-D-erythritol 2,4-cyclodiphosphate synthase (Chlorobium luteolum (strain DSM 273 / BCRC 81028 / 2530) (Pelodictyon luteolum)).